Consider the following 312-residue polypeptide: Carbonic anhydrase 4 (312 aa).

Positions 1-18 (MRMLLALLALSAARPSAS) are cleaved as a signal peptide. One can recognise an Alpha-carbonic anhydrase domain in the interval 21–285 (SHWCYEVQAE…LGQRTVIKSG (265 aa)). 2 cysteine pairs are disulfide-bonded: C24–C36 and C46–C229. H88 serves as the catalytic Proton donor/acceptor. Residues H115, H117, and H140 each coordinate Zn(2+). 225 to 226 (TT) serves as a coordination point for substrate. The GPI-anchor amidated serine moiety is linked to residue S284. Positions 285–312 (GAPGRPLPWALPALLGPMLACLLAGFLR) are cleaved as a propeptide — removed in mature form.

Belongs to the alpha-carbonic anhydrase family. Interacts with SLC4A4. Zn(2+) is required as a cofactor. Expressed in the endothelium of the choriocapillaris in eyes (at protein level). Not expressed in the retinal epithelium at detectable levels.

It localises to the cell membrane. The catalysed reaction is hydrogencarbonate + H(+) = CO2 + H2O. Its activity is regulated as follows. Activated by histamine, L-adrenaline, D-phenylalanine, L- and D-histidine. Inhibited by coumarins, saccharin, sulfonamide derivatives such as acetazolamide and Foscarnet (phosphonoformate trisodium salt). In terms of biological role, catalyzes the reversible hydration of carbon dioxide into bicarbonate and protons and thus is essential to maintaining intracellular and extracellular pH. May stimulate the sodium/bicarbonate transporter activity of SLC4A4 that acts in pH homeostasis. It is essential for acid overload removal from the retina and retina epithelium, and acid release in the choriocapillaris in the choroid. This Homo sapiens (Human) protein is Carbonic anhydrase 4.